Consider the following 396-residue polypeptide: Activity-regulated cytoskeleton-associated protein (396 aa).

The stretch at 54-78 forms a coiled coil; sequence SKQVERELKGLHRSVGKLENNLDGY. Residues 89–100 form an interaction with SH3GL1 or SH3GL3 region; the sequence is KSIKACLCRCQE. The segment at 195 to 214 is interaction with DNM2; the sequence is QSWVPGEDGQPSPGVDTQIF. At Ser260 the chain carries Phosphoserine. Residues Lys268 and Lys269 each participate in a glycyl lysine isopeptide (Lys-Gly) (interchain with G-Cter in ubiquitin) cross-link. The residue at position 278 (Thr278) is a Phosphothreonine. The segment at 358-396 is disordered; the sequence is GLEQAAEPSVTPLPTEDETEALTPALTSESVASDRTQPE. Residues 382–396 are compositionally biased toward polar residues; the sequence is ALTSESVASDRTQPE.

The protein belongs to the ARC/ARG3.1 family. In terms of assembly, homooligomer; homooligomerizes into virion-like capsids. Interacts with SH3GL1/endophilin-2, SH3GL3/endophilin-3 and DNM2/DYN2. Interacts with CAMK2B (in the kinase inactive state); leading to target ARC to inactive synapses. Interacts with PSEN1. Interacts with GRIN2A and GRIN2B; inhibiting homooligomerization. Palmitoylation anchors the protein into the membrane by allowing direct insertion into the hydrophobic core of the lipid bilayer. In terms of processing, ubiquitinated by UBE3A, leading to its degradation by the proteasome, thereby promoting AMPA receptors (AMPARs) expression at synapses. Ubiquitinated by RNF216 at Lys-268 and Lys-269 limiting ARC protein levels induced by synaptic activity and thus regulating ARC-dependent forms of synaptic plasticity. Post-translationally, phosphorylation at Ser-260 by CaMK2 prevents homooligomerization into virion-like capsids by disrupting an interaction surface essential for high-order oligomerization. Phosphorylation by CaMK2 inhibits synaptic activity. In terms of tissue distribution, expressed exclusively in certain parts of the brain including cortex and molecular layer of the hippocampus. Typically expressed at high level in a minority of neurons. Basal expression higher in cortex than in hippocampus, highest in visual cortex.

Its subcellular location is the extracellular vesicle membrane. The protein localises to the postsynaptic cell membrane. It localises to the synapse. It is found in the postsynaptic density. The protein resides in the early endosome membrane. Its subcellular location is the cell projection. The protein localises to the dendrite. It localises to the cytoplasm. It is found in the cytoskeleton. The protein resides in the cell cortex. Its subcellular location is the dendritic spine. The protein localises to the cytoplasmic vesicle. It localises to the secretory vesicle. It is found in the acrosome. The protein resides in the clathrin-coated vesicle membrane. In terms of biological role, master regulator of synaptic plasticity that self-assembles into virion-like capsids that encapsulate RNAs and mediate intercellular RNA transfer in the nervous system. ARC protein is released from neurons in extracellular vesicles that mediate the transfer of ARC mRNA into new target cells, where ARC mRNA can undergo activity-dependent translation. ARC capsids are endocytosed and are able to transfer ARC mRNA into the cytoplasm of neurons. Acts as a key regulator of synaptic plasticity: required for protein synthesis-dependent forms of long-term potentiation (LTP) and depression (LTD) and for the formation of long-term memory. Regulates synaptic plasticity by promoting endocytosis of AMPA receptors (AMPARs) in response to synaptic activity: this endocytic pathway maintains levels of surface AMPARs in response to chronic changes in neuronal activity through synaptic scaling, thereby contributing to neuronal homeostasis. Acts as a postsynaptic mediator of activity-dependent synapse elimination in the developing cerebellum by mediating elimination of surplus climbing fiber synapses. Accumulates at weaker synapses, probably to prevent their undesired enhancement. This suggests that ARC-containing virion-like capsids may be required to eliminate synaptic material. Required to transduce experience into long-lasting changes in visual cortex plasticity and for long-term memory. Involved in postsynaptic trafficking and processing of amyloid-beta A4 (APP) via interaction with PSEN1. In addition to its role in synapses, also involved in the regulation of the immune system: specifically expressed in skin-migratory dendritic cells and regulates fast dendritic cell migration, thereby regulating T-cell activation. The chain is Activity-regulated cytoskeleton-associated protein from Rattus norvegicus (Rat).